The primary structure comprises 689 residues: Elongation factor G 1 (689 aa).

Residues 7–282 (DQVRTIGIIS…AVVDFLPSPL (276 aa)) form the tr-type G domain. Residues 16 to 23 (SHIDAGKT), 80 to 84 (DTPGH), and 134 to 137 (NKMD) each bind GTP.

This sequence belongs to the TRAFAC class translation factor GTPase superfamily. Classic translation factor GTPase family. EF-G/EF-2 subfamily.

It localises to the cytoplasm. Catalyzes the GTP-dependent ribosomal translocation step during translation elongation. During this step, the ribosome changes from the pre-translocational (PRE) to the post-translocational (POST) state as the newly formed A-site-bound peptidyl-tRNA and P-site-bound deacylated tRNA move to the P and E sites, respectively. Catalyzes the coordinated movement of the two tRNA molecules, the mRNA and conformational changes in the ribosome. In Geobacter sulfurreducens (strain ATCC 51573 / DSM 12127 / PCA), this protein is Elongation factor G 1.